A 579-amino-acid polypeptide reads, in one-letter code: MAARSWQDELAQQAEEGSARLRELLSVGLGFLRTELGLDLGLEPKRYPGWVILVGTGALGLLLLFLLGYGWAAACAGARKKRRSPPRKREEAAPPTPAPDDLAQLKNLRSEEQKKKNRKKLPEKPKPNGRTVEVPEDEVVRNPRSITAKQAPETDKKNEKSKKNKKKSKSDAKAVQNSSRHDGKEVDEGAWETKISHREKRQQRKRDKVLTDSGSLDSTIPGIENIITVTTEQLTTASFPVGSKKNKGDSHLNVQVSNFKSGKGDSTLQVSSRLNENLTVNGGGWSEKSVKLSSQLSEEKWNSVPPASAGKRKTEPSAWTQDTGDTNANGKDWGRNWSDRSIFSGIGSTAEPVSQSTTSDYQWDVSRNQPYIDDEWSGLNGLSSADPSSDWNAPAEEWGNWVDEDRASLLKSQEPISNDQKVSDDDKEKGEGALPTGKSKKKKKKKKKQGEDNSHTQDTEDLEKDTREELPVNTSKARPKQEKACSLKTMSTSDPAEVLIKNSQPVKTLPPAISAEPSITLSKGDSDNSSSQVPPMLQDTDKPKSNAKQNSVPPSQTKSETNWESPKQIKKKKKARRET.

Over M1–P48 the chain is Lumenal. Positions M1–W71 are activation of NF-kappa-B. A helical transmembrane segment spans residues G49–Y69. Over G70–T579 the chain is Cytoplasmic. The interval A72–S168 is interaction with BCCIP. Residues A78–G222 are disordered. The interaction with RELA stretch occupies residues D100–R204. Over residues L108–K126 the composition is skewed to basic and acidic residues. Residues E159–S168 are compositionally biased toward basic residues. S179 is subject to Phosphoserine. The span at H197–D207 shows a compositional bias: basic residues. A phosphoserine mark is found at S215 and S250. N6-acetyllysine is present on K263. Residues N277–T579 form a disordered region. 3 positions are modified to phosphoserine: S297, S303, and S308. Polar residues predominate over residues S317–N329. A phosphoserine mark is found at S341 and S366. Composition is skewed to polar residues over residues E351–Q369, N380–W391, and L410–Q420. A lung-homing for mammary tumors region spans residues G378–K440. A phosphoserine mark is found at S412 and S423. Residues K421 to E431 are compositionally biased toward basic and acidic residues. Over residues K438–K448 the composition is skewed to basic residues. Basic and acidic residues predominate over residues Q449–L470. Phosphoserine is present on residues S454, S475, S491, and S493. Polar residues-rich tracts occupy residues P517 to V533 and N546 to S565. S565 bears the Phosphoserine mark. Over residues Q568 to T579 the composition is skewed to basic residues.

Interacts with BCCIP, CREBBP/CBP and RELA/p65. As to expression, in the mammary gland, expressed at the apical surface of epithelial cells lining ducts, as well as in the mammary fat pad. Not detected in the spleen, kidney, lung, or skin; minute amounts seen in the liver. Expressed in Purkinje neurons in the early postnatal and adult cerebellum. Overexpressed in mammary tumors (at protein level).

The protein resides in the endoplasmic reticulum membrane. The protein localises to the nucleus membrane. Its subcellular location is the cell junction. It localises to the tight junction. It is found in the nucleus. The protein resides in the nucleolus. The protein localises to the cytoplasm. Its subcellular location is the perinuclear region. In terms of biological role, down-regulates SLC1A2/EAAT2 promoter activity when expressed ectopically. Activates the nuclear factor kappa-B (NF-kappa-B) transcription factor. Promotes anchorage-independent growth of immortalized melanocytes and astrocytes which is a key component in tumor cell expansion. Promotes lung metastasis and also has an effect on bone and brain metastasis, possibly by enhancing the seeding of tumor cells to the target organ endothelium. Induces chemoresistance. This Mus musculus (Mouse) protein is Protein LYRIC (Mtdh).